A 173-amino-acid polypeptide reads, in one-letter code: Alkyl hydroperoxide reductase AhpD (173 aa).

The Proton donor role is filled by Cys-131. Residues Cys-131 and Cys-134 are joined by a disulfide bond. Cys-134 serves as the catalytic Cysteine sulfenic acid (-SOH) intermediate.

This sequence belongs to the AhpD family.

It carries out the reaction N(6)-[(R)-dihydrolipoyl]-L-lysyl-[lipoyl-carrier protein] + a hydroperoxide = N(6)-[(R)-lipoyl]-L-lysyl-[lipoyl-carrier protein] + an alcohol + H2O. Its function is as follows. Antioxidant protein with alkyl hydroperoxidase activity. Required for the reduction of the AhpC active site cysteine residues and for the regeneration of the AhpC enzyme activity. The chain is Alkyl hydroperoxide reductase AhpD from Rhizorhabdus wittichii (strain DSM 6014 / CCUG 31198 / JCM 15750 / NBRC 105917 / EY 4224 / RW1) (Sphingomonas wittichii).